We begin with the raw amino-acid sequence, 317 residues long: Adenine deaminase (317 aa).

Residues histidine 14, histidine 16, and histidine 194 each coordinate Zn(2+). Residue glutamate 197 is the Proton donor of the active site. Aspartate 275 contributes to the Zn(2+) binding site. Aspartate 276 lines the substrate pocket.

This sequence belongs to the metallo-dependent hydrolases superfamily. Adenosine and AMP deaminases family. Adenine deaminase type 2 subfamily. Zn(2+) is required as a cofactor.

The catalysed reaction is adenine + H2O + H(+) = hypoxanthine + NH4(+). Catalyzes the hydrolytic deamination of adenine to hypoxanthine. Plays an important role in the purine salvage pathway and in nitrogen catabolism. The polypeptide is Adenine deaminase (Pseudomonas fluorescens (strain Pf0-1)).